A 245-amino-acid chain; its full sequence is Photosystem II protein PSBS2 (245 aa).

A chloroplast-targeting transit peptide spans 1–25 (MAMTLSTKAFAQRGVSARKNTVRVY). Transmembrane regions (helical) follow at residues 72-92 (LFVG…EILT), 108-128 (GIEV…AAVL), 185-205 (LGFA…LAQF), and 217-237 (EFGL…EGSG).

This sequence belongs to the ELIP/psbS family.

The protein localises to the plastid. It localises to the chloroplast thylakoid membrane. Required for non-photochemical quenching (NPQ), a mechanism that converts and dissipates the harmful excess absorbed light energy into heat and protect the photosynthetic apparatus from photo-oxidative damage. Seems involved in the activation of NPQ, possibly by promoting conformational changes required for activation of LHCSR3-dependent quenching in the antenna of photosystem II (PSII). The protein is Photosystem II protein PSBS2 of Chlamydomonas reinhardtii (Chlamydomonas smithii).